The chain runs to 100 residues: Aspartyl/glutamyl-tRNA(Asn/Gln) amidotransferase subunit C (100 aa).

The protein belongs to the GatC family. As to quaternary structure, heterotrimer of A, B and C subunits.

It catalyses the reaction L-glutamyl-tRNA(Gln) + L-glutamine + ATP + H2O = L-glutaminyl-tRNA(Gln) + L-glutamate + ADP + phosphate + H(+). It carries out the reaction L-aspartyl-tRNA(Asn) + L-glutamine + ATP + H2O = L-asparaginyl-tRNA(Asn) + L-glutamate + ADP + phosphate + 2 H(+). Its function is as follows. Allows the formation of correctly charged Asn-tRNA(Asn) or Gln-tRNA(Gln) through the transamidation of misacylated Asp-tRNA(Asn) or Glu-tRNA(Gln) in organisms which lack either or both of asparaginyl-tRNA or glutaminyl-tRNA synthetases. The reaction takes place in the presence of glutamine and ATP through an activated phospho-Asp-tRNA(Asn) or phospho-Glu-tRNA(Gln). This Staphylococcus saprophyticus subsp. saprophyticus (strain ATCC 15305 / DSM 20229 / NCIMB 8711 / NCTC 7292 / S-41) protein is Aspartyl/glutamyl-tRNA(Asn/Gln) amidotransferase subunit C.